A 228-amino-acid chain; its full sequence is 3-oxoadipate CoA-transferase subunit A (228 aa).

25 to 31 contributes to the CoA binding site; that stretch reads GGFGTAG.

Belongs to the 3-oxoacid CoA-transferase subunit A family. Heterodimer.

It carries out the reaction 3-oxoadipate + succinyl-CoA = 3-oxoadipyl-CoA + succinate. Its pathway is aromatic compound metabolism; beta-ketoadipate pathway; acetyl-CoA and succinyl-CoA from 3-oxoadipate: step 1/2. This Acinetobacter baylyi (strain ATCC 33305 / BD413 / ADP1) protein is 3-oxoadipate CoA-transferase subunit A (pcaI).